Here is a 229-residue protein sequence, read N- to C-terminus: Potassium/proton antiporter CemA (229 aa).

Helical transmembrane passes span 7 to 27 (FTPL…SFSV), 107 to 127 (ILHF…SILG), and 189 to 209 (IISG…KYWI).

It belongs to the CemA family.

The protein localises to the plastid. It is found in the chloroplast inner membrane. The catalysed reaction is K(+)(in) + H(+)(out) = K(+)(out) + H(+)(in). Contributes to K(+)/H(+) antiport activity by supporting proton efflux to control proton extrusion and homeostasis in chloroplasts in a light-dependent manner to modulate photosynthesis. Prevents excessive induction of non-photochemical quenching (NPQ) under continuous-light conditions. Indirectly promotes efficient inorganic carbon uptake into chloroplasts. This chain is Potassium/proton antiporter CemA, found in Nicotiana tomentosiformis (Tobacco).